The chain runs to 110 residues: Integration host factor subunit alpha (110 aa).

The protein belongs to the bacterial histone-like protein family. Heterodimer of an alpha and a beta chain.

Functionally, this protein is one of the two subunits of integration host factor, a specific DNA-binding protein that functions in genetic recombination as well as in transcriptional and translational control. The chain is Integration host factor subunit alpha from Bdellovibrio bacteriovorus (strain ATCC 15356 / DSM 50701 / NCIMB 9529 / HD100).